The chain runs to 77 residues: Dermatoxin-B1 (77 aa).

Positions 1-22 (MAFLKKSLFLVLFLGLVPLSLC) are cleaved as a signal peptide. A propeptide spanning residues 23–42 (ESEKREGENEEEQEDDQSEE) is cleaved from the precursor. A disordered region spans residues 24–45 (SEKREGENEEEQEDDQSEEKRS). Over residues 30-40 (ENEEEQEDDQS) the composition is skewed to acidic residues. At glutamine 76 the chain carries Glutamine amide.

The protein belongs to the frog skin active peptide (FSAP) family. Dermatoxin subfamily. In terms of tissue distribution, highest expression in skin and to a lesser extent in brain and intestine.

The protein localises to the secreted. Its subcellular location is the target cell membrane. Possesses a potent antimicrobial activity against Gram-positive bacteria B.megaterium, C.glutamicum and S.aureus and mollicutes A.laidlawii and S.melliferum. Less active against Gram-negative bacteria B.cepacia, P.aeruginosa, S.typhimurium and S.meliloti. Probably acts by disturbing membrane functions with its amphipathic structure. The polypeptide is Dermatoxin-B1 (Phyllomedusa bicolor (Two-colored leaf frog)).